Reading from the N-terminus, the 40-residue chain is RNA replication protein (40 aa).

This sequence belongs to the potexviruses/carlaviruses RNA replication protein family.

It carries out the reaction RNA(n) + a ribonucleoside 5'-triphosphate = RNA(n+1) + diphosphate. The catalysed reaction is ATP + H2O = ADP + phosphate + H(+). RNA replication. The central part of this protein possibly functions as an ATP-binding helicase. This Lily symptomless virus (LSV) protein is RNA replication protein.